The chain runs to 399 residues: Ankyrin repeat domain-containing protein 65 (399 aa).

10 ANK repeats span residues 40–69 (QGWGHLLQAVWRGPAGLVTQLLRQGASVEE), 73–102 (AGRTPLHLAVLRGHAPLVRLLLQRGAPVGA), 106–135 (AGRTALHEAAWHGHSRVAELLLQRGASAAA), 139–168 (TGLTPLHWAAALGHTLLAARLLEAPGPGPA), 176–205 (RGWTAAHWAAAGGRLAVLELLAAGGAGLDG), 207–231 (LLVAAAAGRGAALRFLLARGARVDA), 235–264 (AGATALGLAAALGRSQDIEVLLGHGADPGI), 268–297 (HGRSALHRAAARGHLLAVQLLVTQGAEVDA), 301–330 (LGLTPLHHASREGHVEVAGCLLDRGAQVDA), and 334–363 (LRKTPLHLAAERGHGPTVGLLLSRGASPTL). The segment at 377–399 (DLPQALPELGGGEKECEGIESTG) is disordered.

In Homo sapiens (Human), this protein is Ankyrin repeat domain-containing protein 65 (ANKRD65).